Reading from the N-terminus, the 293-residue chain is Glycine--tRNA ligase alpha subunit (293 aa).

The protein belongs to the class-II aminoacyl-tRNA synthetase family. As to quaternary structure, tetramer of two alpha and two beta subunits.

The protein resides in the cytoplasm. The catalysed reaction is tRNA(Gly) + glycine + ATP = glycyl-tRNA(Gly) + AMP + diphosphate. In Wolinella succinogenes (strain ATCC 29543 / DSM 1740 / CCUG 13145 / JCM 31913 / LMG 7466 / NCTC 11488 / FDC 602W) (Vibrio succinogenes), this protein is Glycine--tRNA ligase alpha subunit.